Consider the following 149-residue polypeptide: Calmodulin (149 aa).

The residue at position 2 (alanine 2) is an N-acetylalanine. EF-hand domains follow at residues 8 to 43 (EQIA…LGQN), 44 to 79 (PTEA…KMKD), 81 to 116 (DTEE…LGEK), and 117 to 149 (LTDE…MMAK). Residues aspartate 21, aspartate 23, aspartate 25, threonine 27, glutamate 32, aspartate 57, aspartate 59, asparagine 61, threonine 63, glutamate 68, aspartate 94, aspartate 96, asparagine 98, and glutamate 105 each coordinate Ca(2+). Lysine 116 bears the N6,N6,N6-trimethyllysine mark. Residues aspartate 130, aspartate 132, aspartate 134, histidine 136, and glutamate 141 each contribute to the Ca(2+) site.

This sequence belongs to the calmodulin family.

Calmodulin mediates the control of a large number of enzymes, ion channels and other proteins by Ca(2+). Among the enzymes to be stimulated by the calmodulin-Ca(2+) complex are a number of protein kinases and phosphatases. This is Calmodulin from Tetrahymena pyriformis.